Reading from the N-terminus, the 176-residue chain is NAD(P)H-quinone oxidoreductase subunit 6, chloroplastic (176 aa).

5 helical membrane-spanning segments follow: residues 10–30, 32–52, 61–81, 92–112, and 152–172; these read FLLV…VLLP, PIFS…LYIL, AQLL…VMFM, LWTV…FLLM, and FFLP…GAIS.

Belongs to the complex I subunit 6 family. NDH is composed of at least 16 different subunits, 5 of which are encoded in the nucleus.

It localises to the plastid. The protein localises to the chloroplast thylakoid membrane. The catalysed reaction is a plastoquinone + NADH + (n+1) H(+)(in) = a plastoquinol + NAD(+) + n H(+)(out). It catalyses the reaction a plastoquinone + NADPH + (n+1) H(+)(in) = a plastoquinol + NADP(+) + n H(+)(out). Its function is as follows. NDH shuttles electrons from NAD(P)H:plastoquinone, via FMN and iron-sulfur (Fe-S) centers, to quinones in the photosynthetic chain and possibly in a chloroplast respiratory chain. The immediate electron acceptor for the enzyme in this species is believed to be plastoquinone. Couples the redox reaction to proton translocation, and thus conserves the redox energy in a proton gradient. The chain is NAD(P)H-quinone oxidoreductase subunit 6, chloroplastic (ndhG) from Capsella bursa-pastoris (Shepherd's purse).